The chain runs to 291 residues: Undecaprenyl-diphosphatase (291 aa).

The next 8 helical transmembrane spans lie at 1–21 (MFII…LTEF), 48–68 (SAFT…AWVF), 102–122 (LHVL…DDFI), 126–146 (LFSV…MIIA), 162–182 (ISYF…WPGF), 203–223 (SDFT…LSLL), 231–251 (IADI…GLIA), and 267–287 (FAIY…GFGI).

Belongs to the UppP family.

The protein resides in the cell membrane. The enzyme catalyses di-trans,octa-cis-undecaprenyl diphosphate + H2O = di-trans,octa-cis-undecaprenyl phosphate + phosphate + H(+). Catalyzes the dephosphorylation of undecaprenyl diphosphate (UPP). Confers resistance to bacitracin. The polypeptide is Undecaprenyl-diphosphatase (Staphylococcus aureus (strain USA300)).